The primary structure comprises 161 residues: DNA-binding protein inhibitor ID-4 (161 aa).

The bHLH domain occupies 52-104 (AAEAAADEPALCLQCDMNDCYSRLRRLVPTIPPNKKVSKVEILPHVIDYILDL). The tract at residues 116–161 (RQPPPPAPPHHPAGTCPAAPPRTPLTALNTDPAGAVNKQGDSILCR) is disordered. Residues 117–126 (QPPPPAPPHH) are compositionally biased toward pro residues.

Heterodimer with other HLH proteins.

Its subcellular location is the nucleus. Transcriptional regulator (lacking a basic DNA binding domain) which negatively regulates the basic helix-loop-helix (bHLH) transcription factors by forming heterodimers and inhibiting their DNA binding and transcriptional activity. Implicated in regulating a variety of cellular processes, including cellular growth, senescence, differentiation, apoptosis, angiogenesis, and neoplastic transformation. This chain is DNA-binding protein inhibitor ID-4 (ID4), found in Sus scrofa (Pig).